Reading from the N-terminus, the 270-residue chain is Formamidopyrimidine-DNA glycosylase (270 aa).

Catalysis depends on Pro-2, which acts as the Schiff-base intermediate with DNA. Glu-3 serves as the catalytic Proton donor. The active-site Proton donor; for beta-elimination activity is Lys-58. Positions 91, 110, and 151 each coordinate DNA. The segment at 236–270 (RVYDREDAPCRRCATPIRRIVQAQRASFYCPTCQR) adopts an FPG-type zinc-finger fold. Arg-260 (proton donor; for delta-elimination activity) is an active-site residue.

The protein belongs to the FPG family. In terms of assembly, monomer. Requires Zn(2+) as cofactor.

It carries out the reaction Hydrolysis of DNA containing ring-opened 7-methylguanine residues, releasing 2,6-diamino-4-hydroxy-5-(N-methyl)formamidopyrimidine.. The enzyme catalyses 2'-deoxyribonucleotide-(2'-deoxyribose 5'-phosphate)-2'-deoxyribonucleotide-DNA = a 3'-end 2'-deoxyribonucleotide-(2,3-dehydro-2,3-deoxyribose 5'-phosphate)-DNA + a 5'-end 5'-phospho-2'-deoxyribonucleoside-DNA + H(+). Involved in base excision repair of DNA damaged by oxidation or by mutagenic agents. Acts as a DNA glycosylase that recognizes and removes damaged bases. Has a preference for oxidized purines, such as 7,8-dihydro-8-oxoguanine (8-oxoG). Has AP (apurinic/apyrimidinic) lyase activity and introduces nicks in the DNA strand. Cleaves the DNA backbone by beta-delta elimination to generate a single-strand break at the site of the removed base with both 3'- and 5'-phosphates. The polypeptide is Formamidopyrimidine-DNA glycosylase (Thiobacillus denitrificans (strain ATCC 25259 / T1)).